Here is a 426-residue protein sequence, read N- to C-terminus: Glutamate-1-semialdehyde 2,1-aminomutase (426 aa).

At lysine 265 the chain carries N6-(pyridoxal phosphate)lysine.

This sequence belongs to the class-III pyridoxal-phosphate-dependent aminotransferase family. HemL subfamily. As to quaternary structure, homodimer. Pyridoxal 5'-phosphate is required as a cofactor.

It localises to the cytoplasm. The enzyme catalyses (S)-4-amino-5-oxopentanoate = 5-aminolevulinate. Its pathway is porphyrin-containing compound metabolism; protoporphyrin-IX biosynthesis; 5-aminolevulinate from L-glutamyl-tRNA(Glu): step 2/2. In Salmonella agona (strain SL483), this protein is Glutamate-1-semialdehyde 2,1-aminomutase.